Here is a 147-residue protein sequence, read N- to C-terminus: Ubiquitin-conjugating enzyme E2 D1 (147 aa).

Residues 1–147 (MALKRIQKEL…AREWTQKYAM (147 aa)) form the UBC core domain. Cys-85 acts as the Glycyl thioester intermediate in catalysis.

It belongs to the ubiquitin-conjugating enzyme family. Component of a E3 ubiquitin ligase complex containing UBE2D1, SIAH1, CACYBP/SIP, SKP1, APC and TBL1X. Interacts with RNF11. In terms of processing, autoubiquitinated.

The protein localises to the cytoplasm. It catalyses the reaction S-ubiquitinyl-[E1 ubiquitin-activating enzyme]-L-cysteine + [E2 ubiquitin-conjugating enzyme]-L-cysteine = [E1 ubiquitin-activating enzyme]-L-cysteine + S-ubiquitinyl-[E2 ubiquitin-conjugating enzyme]-L-cysteine.. It carries out the reaction S-ubiquitinyl-[E1 ubiquitin-activating enzyme]-L-cysteine + [acceptor protein]-L-lysine = [E1 ubiquitin-activating enzyme]-L-cysteine + N(6)-monoubiquitinyl-[acceptor protein]-L-lysine.. The protein operates within protein modification; protein ubiquitination. Functionally, accepts ubiquitin from the E1 complex and catalyzes its covalent attachment to other proteins. In vitro catalyzes 'Lys-48'-linked polyubiquitination. Mediates the selective degradation of short-lived and abnormal proteins. Functions in the E6/E6-AP-induced ubiquitination of p53/TP53. Mediates ubiquitination of PEX5 and auto-ubiquitination of STUB1, TRAF6 and TRIM63/MURF1. Ubiquitinates STUB1-associated HSP90AB1 in vitro. Lacks inherent specificity for any particular lysine residue of ubiquitin. Essential for viral activation of IRF3. Mediates polyubiquitination of CYP3A4. This is Ubiquitin-conjugating enzyme E2 D1 (UBE2D1) from Bos taurus (Bovine).